A 229-amino-acid chain; its full sequence is Cytidylate kinase (229 aa).

12–20 (GPSGAGKGT) is a binding site for ATP.

This sequence belongs to the cytidylate kinase family. Type 1 subfamily.

The protein localises to the cytoplasm. It catalyses the reaction CMP + ATP = CDP + ADP. It carries out the reaction dCMP + ATP = dCDP + ADP. In Pseudomonas paraeruginosa (strain DSM 24068 / PA7) (Pseudomonas aeruginosa (strain PA7)), this protein is Cytidylate kinase.